The primary structure comprises 519 residues: Putative cytochrome P450 CYP13A10 (519 aa).

The helical transmembrane segment at 3–23 (VILLAIPTLFIGFISYYLWIW) threads the bilayer. Cysteine 465 is a heme binding site.

This sequence belongs to the cytochrome P450 family. Requires heme as cofactor.

The protein localises to the membrane. Functionally, cytochromes P450 are a group of heme-thiolate monooxygenases. They oxidize a variety of structurally unrelated compounds, including steroids, fatty acids, and xenobiotics. This chain is Putative cytochrome P450 CYP13A10 (cyp-13A10), found in Caenorhabditis elegans.